The primary structure comprises 190 residues: B3 domain-containing protein Os02g0764100 (190 aa).

The TF-B3 DNA-binding region spans 17-121 (FEKAVTPSDV…KLLFIDCKKN (105 aa)).

It localises to the nucleus. The protein is B3 domain-containing protein Os02g0764100 of Oryza sativa subsp. japonica (Rice).